The primary structure comprises 506 residues: Tetratricopeptide repeat protein 8 (506 aa).

Positions 83 to 112 (RPGTSFARPKTSAKGVNPILRPTTNAGRPL) are disordered. 8 TPR repeats span residues 217 to 250 (YYWKNQLAKCYLRLGMLQDATKQLQSSLEQKKLI), 251 to 283 (ETFALLSKAYNRVDQPMAALKTYSAGLEVFPEN), 284 to 317 (VTMLTGMARVQEALGEYDESVKLYKRVLDAESNN), 319 to 351 (EAIACVATTYYYGGKPELAMRYYRRILQMGVSS), 353 to 385 (ELFLNIGLCCMAAQQFDFALSSILRAQSTMTDD), 388 to 421 (ADVWYNIGQILVDIGDLVSAARSFRIALSHDPDH), 423 to 455 (ESLVNLGILKHREGKIDEARSLYSSATSKNPYM), and 456 to 489 (FEGNYNLGLVSFTQGKYHECRELIEKALAAFPEH).

In terms of assembly, part of BBSome complex, that contains at least bbs-1, bbs-2, bbs-4, bbs-5, osm-12, bbs-8/ttc-8 and bbs-9. In terms of tissue distribution, expressed in head and tail neurons. Expressed in ciliated male tail-neurons. Expressed in thermosensory and CO(2) sensory AFD neurons.

The protein resides in the cell projection. It is found in the cilium. The protein localises to the cytoplasm. Its subcellular location is the cytoskeleton. It localises to the cilium basal body. The protein resides in the cilium axoneme. Its function is as follows. Component of the BBSome complex. The BBSome complex is thought to function as a coat complex required for sorting of specific membrane proteins to the primary cilia. The BBSome complex is required for ciliogenesis but is dispensable for centriolar satellite function. Required for proper BBSome complex assembly and its ciliary localization. Required for cilia biogenesis and both the assembly and movement of intraflagellar transport proteins along the ciliary axoneme. Plays a role in guanylyl cyclase localization in the ring-like structures at the base of the finger compartment in AFD sensory neurons. The polypeptide is Tetratricopeptide repeat protein 8 (Caenorhabditis elegans).